Consider the following 325-residue polypeptide: GMP reductase (325 aa).

The active-site Thioimidate intermediate is Cys174. Residue 203–226 (LIADGGIRTHGDIAKSIRFGASMV) participates in NADP(+) binding.

This sequence belongs to the IMPDH/GMPR family. GuaC type 2 subfamily.

It carries out the reaction IMP + NH4(+) + NADP(+) = GMP + NADPH + 2 H(+). Its function is as follows. Catalyzes the irreversible NADPH-dependent deamination of GMP to IMP. It functions in the conversion of nucleobase, nucleoside and nucleotide derivatives of G to A nucleotides, and in maintaining the intracellular balance of A and G nucleotides. The sequence is that of GMP reductase from Staphylococcus aureus (strain MRSA252).